The following is a 427-amino-acid chain: O-methyltransferase FrzF (427 aa).

Position 281 (Asp281) interacts with S-adenosyl-L-methionine. His327 acts as the Proton acceptor in catalysis.

It belongs to the class I-like SAM-binding methyltransferase superfamily. Cation-independent O-methyltransferase family. In terms of assembly, homodimer.

It carries out the reaction (1S,4S)-4-[(4-hydroxyphenyl)methyl]-2,5-diazaspiro[bicyclo[3.2.1]octane-6,1'-cyclohexan]-4'-one + S-adenosyl-L-methionine = (1S,4S)-4-[(4-methoxyphenyl)methyl]-2,5-diazaspiro[bicyclo[3.2.1]octane-6,1'-cyclohexan]-4'-one + S-adenosyl-L-homocysteine + H(+). The catalysed reaction is (1S,4S)-4-[(4-hydroxyphenyl)methyl]-2-methyl-2,5-diazaspiro[bicyclo[3.2.1]octane-6,1'-cyclohexan]-4'-one + S-adenosyl-L-methionine = (1S,4S)-4-[(4-methoxyphenyl)methyl]-2-methyl-2,5-diazaspiro[bicyclo[3.2.1]octane-6,1'-cyclohexan]-4'-one + S-adenosyl-L-homocysteine + H(+). Its pathway is secondary metabolite biosynthesis. Functionally, O-methyltransferase; part of the gene cluster that mediates the biosynthesis of the alkaloid (-)-FR901483, a potent immunosuppressant that shows efficacy in animal models and a probable inhibitor of purine nucleotide biosynthesis by targeting phosphoribosylpyrophosphate amidotransferase (PPAT). Within the pathway, FrzF methylates the phenolic oxygen at position C4. The biosynthesis of (-)-FR901483 starts with the condensation of two L-tyrosines to yield (S,S)-dityrosyl-piperazine. This process occurs in 3 steps with the non-canonical nonribosomal peptide synthetase FrzA catalyzing the reduction of L-tyrosine into L-tyrosinal, the spontaneous condensation of 2 L-tyrosinal units, and the subsequent reduction by the NmrA-like family domain-containing oxidoreductase FrzB. The cytochrome P450 monooxygenase FrzC then performs coupling between N10 and C1' to morph the piperazine into a 1,4-diazabicyclo[3.2.1]octane spiro-fused to a 2,5-cyclohexadienone. The dienone portion is further reduced to cyclohexanone by the flavin-dependent reductase FrzD. The methyltranserases (MTs) FrzE and FrzF are then involved in the methylation at the C10' amine and the C4 phenolic oxygen, respectively. The order of the two MTs appear to be interchangeable. Cleavage of the C9-N10' bond by the dioxygenase FrzG then leads to formation of a conjugated iminium. In addition to the oxidation of C9, an additional dehydrogenation between C7 and C8 can occur to give a likely shunt product. The next biosynthetic step is the intramolecular aldol condensation catalyzed by the newly identified aldolase FrzH to yield an aza-tricyclic product with the formation of a C9-C3' bond. The short-chain dehydrogenase/reductase FrzI then produces dephospho-(-)-FR901483 that is phosphorylated at C4'-OH into (-)-FR901483 by the phosphotransferase FrzJ. This chain is O-methyltransferase FrzF, found in Cladobotryum sp.